The primary structure comprises 130 residues: Small ribosomal subunit protein uS9 (130 aa).

It belongs to the universal ribosomal protein uS9 family.

This is Small ribosomal subunit protein uS9 from Clostridioides difficile (strain 630) (Peptoclostridium difficile).